Reading from the N-terminus, the 141-residue chain is Large ribosomal subunit protein uL11B/uL11C (141 aa).

The protein belongs to the universal ribosomal protein uL11 family. Part of the ribosomal stalk of the 50S ribosomal subunit. Interacts with L10 and the large rRNA to form the base of the stalk. L10 forms an elongated spine to which L12 dimers bind in a sequential fashion forming a multimeric L10(L12)X complex. Post-translationally, one or more lysine residues are methylated.

Its function is as follows. Forms part of the ribosomal stalk which helps the ribosome interact with GTP-bound translation factors. The chain is Large ribosomal subunit protein uL11B/uL11C from Bacillus cereus (strain ATCC 14579 / DSM 31 / CCUG 7414 / JCM 2152 / NBRC 15305 / NCIMB 9373 / NCTC 2599 / NRRL B-3711).